The sequence spans 419 residues: Glutamyl-tRNA reductase (419 aa).

Substrate-binding positions include 49–52 (TCNR), Ser-107, 112–114 (EPQ), and Gln-118. The active-site Nucleophile is the Cys-50. NADP(+) is bound at residue 187–192 (GAGETI).

It belongs to the glutamyl-tRNA reductase family. In terms of assembly, homodimer.

The enzyme catalyses (S)-4-amino-5-oxopentanoate + tRNA(Glu) + NADP(+) = L-glutamyl-tRNA(Glu) + NADPH + H(+). The protein operates within porphyrin-containing compound metabolism; protoporphyrin-IX biosynthesis; 5-aminolevulinate from L-glutamyl-tRNA(Glu): step 1/2. Its function is as follows. Catalyzes the NADPH-dependent reduction of glutamyl-tRNA(Glu) to glutamate 1-semialdehyde (GSA). The protein is Glutamyl-tRNA reductase of Vibrio atlanticus (strain LGP32) (Vibrio splendidus (strain Mel32)).